A 405-amino-acid chain; its full sequence is Exodeoxyribonuclease 7 large subunit (405 aa).

Belongs to the XseA family. In terms of assembly, heterooligomer composed of large and small subunits.

It localises to the cytoplasm. The catalysed reaction is Exonucleolytic cleavage in either 5'- to 3'- or 3'- to 5'-direction to yield nucleoside 5'-phosphates.. Functionally, bidirectionally degrades single-stranded DNA into large acid-insoluble oligonucleotides, which are then degraded further into small acid-soluble oligonucleotides. This is Exodeoxyribonuclease 7 large subunit from Syntrophomonas wolfei subsp. wolfei (strain DSM 2245B / Goettingen).